The primary structure comprises 300 residues: Merozoite surface protein 2 (300 aa).

The signal sequence occupies residues 1-20; that stretch reads MKVIKTLSIINFFIFVTFNI. N-linked (GlcNAc...) asparagine glycans are attached at residues asparagine 22 and asparagine 36. The segment at 44–226 is polymorphic region; it reads EESKPPTGAV…EQTESPELQS (183 aa). One copy of the 1; inverted repeat lies at 51-58; the sequence is GAVAGSGA. Residues 51-110 are 7 X 8 AA tandem repeats of G-S-G-A-G-A-V-A; sequence GAVAGSGAGAGSGAGAVAGSGAGAVAGSGAGAVAGSGAGAVAGSGAGAVAGSGAVAGSGA. A run of 5 repeats spans residues 61 to 68, 69 to 76, 77 to 84, 85 to 92, and 93 to 100. The 7; inverted repeat unit spans residues 103–110; that stretch reads GAVAGSGA. The interval 111 to 261 is disordered; it reads GNGANPGADA…DSQKECTDGN (151 aa). The segment covering 123-148 has biased composition (low complexity); sequence SPSTPATTTTTTTTNDAEASTSTSSE. Residues 149 to 165 show a composition bias toward basic and acidic residues; that stretch reads NRNHNNAETNPKGKGEV. 2 stretches are compositionally biased toward polar residues: residues 167–193 and 200–228; these read KPNQ…NVPR and KSPT…QSAP. A glycan (N-linked (GlcNAc...) asparagine) is linked at asparagine 177. The N-linked (GlcNAc...) asparagine glycan is linked to asparagine 249. Cysteine 257 and cysteine 265 are disulfide-bonded. N-linked (GlcNAc...) asparagine glycosylation is found at asparagine 273 and asparagine 274. Asparagine 274 carries the GPI-anchor amidated asparagine lipid modification. Positions 275–300 are cleaved as a propeptide — removed in mature form; the sequence is SSNIASINKFVVLISATLVLSFAIFI.

It is found in the cell membrane. May play a role in the merozoite attachment to the erythrocyte. The protein is Merozoite surface protein 2 of Plasmodium falciparum (isolate imr143).